A 594-amino-acid chain; its full sequence is Insulin-like growth factor 2 mRNA-binding protein 3-A (594 aa).

2 RRM domains span residues 2-75 (NKLY…HSVP) and 81-156 (RKLQ…YIPD). A compositionally biased stretch (low complexity) spans 161-177 (PQAPSQQLQQQPQQQHP). Positions 161–206 (PQAPSQQLQQQPQQQHPQGRRGFGQRGPARQGSPGAAARPKPQTEV) are disordered. 2 KH domains span residues 205–270 (EVPL…CKII) and 286–353 (EIPL…EEEI). Residues 392-415 (GMPPPSVGVPSPTSSTSYPPFGQQ) are disordered. Residues 399–411 (GVPSPTSSTSYPP) are compositionally biased toward low complexity. 2 KH domains span residues 418 to 483 (SETV…QGRI) and 500 to 566 (KLET…QRKI).

Belongs to the RRM IMP/VICKZ family. In terms of assembly, homodimer and multimer. Associates with microtubules. Interaction with a translocation machinery protein TRAPA of the endoplasmic reticulum. Component of a mRNP complex, at least composed of DAZAP1, IGF2BP3, STAU and VgRBP60. The mRNP complex with DAZAP1, IGF2BP3, STAU and VgRBP60 is only found in the cytoplasm. Interacts with a hnRNP 1 related RNA transport protein VgRBP60 both in the nucleus (in a RNA-independent manner) and the cytoplasm (in a RNA-dependent manner). Found in a B3 activator complex.

It localises to the nucleus. Its subcellular location is the cytoplasm. The protein resides in the endoplasmic reticulum. Functionally, RNA-binding protein that acts as a regulator of mRNA transport and localization. Binds to the RNA sequence motif 5'-UUCAC-3'. Preferentially binds to N6-methyladenosine (m6A)-containing mRNAs and increases their stability. Mediates the specific association of Vg1 RNA to microtubules. Binds specifically to the vegetal localization elements (VLE or VgLE) in the 3'-UTR of Vg1 and VegT mRNAs. Binds to the Vg1 and VegT mRNAs in both the nucleus and the cytoplasm. May regulate mRNA translation. Acts as a transcription regulator. Binds to the 5'-[TA]GGTTACT-3' motif within element 3 of the TFIIIA gene promoter. The chain is Insulin-like growth factor 2 mRNA-binding protein 3-A (igf2bp3-a) from Xenopus laevis (African clawed frog).